A 288-amino-acid chain; its full sequence is Homoserine kinase (288 aa).

78 to 88 (PLARGLGSSSS) contacts ATP.

It belongs to the GHMP kinase family. Homoserine kinase subfamily.

The protein resides in the cytoplasm. The enzyme catalyses L-homoserine + ATP = O-phospho-L-homoserine + ADP + H(+). It participates in amino-acid biosynthesis; L-threonine biosynthesis; L-threonine from L-aspartate: step 4/5. In terms of biological role, catalyzes the ATP-dependent phosphorylation of L-homoserine to L-homoserine phosphate. This Streptococcus mutans serotype c (strain ATCC 700610 / UA159) protein is Homoserine kinase.